A 570-amino-acid chain; its full sequence is MFASGHTTPRLGIDLAGGTSITLRAVPEAGQESAINKTNMDTAVEIMNRRVNGLGVSEAEVQTQGDRNIIVYIPKGTNSKEARQQVGTTAKLYFRPVLATELSGANATGTPSASETGGASDKATDKATDKATDKATDGDKATDGDKASGTPSDSASASATSQGRAASDALKADPSPSATSSDGASPSPSASASGDDATAKLQQQYAALDCTDKNARAKAGDGAKPDEQTVACGQNSQGQWQKYILGAAAVDGTEVDEAEAVYNTQTAAGWTVTMKFTDKGSKKFADITGKLAQNQSPQNQFAIVLDNEVVSDPYVSQALTGGNAEISGSFDQEEAQSLANMLSYGALPLTFKEDSVTTVTAALGGEQLKAGLIAGAIGLALVVLYLLFYYRGLSFIAVCSLLVSAGLTYVIMALLGPTIGFALNLPAVCGAIVAIGITADSFIVYFERVRDEIREGRTLRPAVERAWPRARRTILVSDFVSFLAAAVLFIVTVGKVQGFAFTLGLTTLLDVVVVFLFTKPLLTLMARRKFFASGHKWSGLDPKALGAKPPLRRTRRPSRPAAGPVDPKEA.

Residues 104-117 (GANATGTPSASETG) are compositionally biased toward polar residues. The tract at residues 104 to 198 (GANATGTPSA…SASASGDDAT (95 aa)) is disordered. Residues 122–146 (KATDKATDKATDKATDGDKATDGDK) are compositionally biased toward basic and acidic residues. 2 stretches are compositionally biased toward low complexity: residues 147 to 161 (ASGT…SATS) and 172 to 196 (ADPS…SGDD). 5 helical membrane passes run 370–390 (AGLI…LFYY), 395–415 (FIAV…MALL), 419–439 (IGFA…GITA), 474–494 (ILVS…VTVG), and 498–518 (GFAF…FLFT). A disordered region spans residues 540–570 (LDPKALGAKPPLRRTRRPSRPAAGPVDPKEA).

It belongs to the SecD/SecF family. SecD subfamily. In terms of assembly, forms a complex with SecF. Part of the essential Sec protein translocation apparatus which comprises SecA, SecYEG and auxiliary proteins SecDF. Other proteins may also be involved.

It is found in the cell membrane. Part of the Sec protein translocase complex. Interacts with the SecYEG preprotein conducting channel. SecDF uses the proton motive force (PMF) to complete protein translocation after the ATP-dependent function of SecA. The chain is Protein translocase subunit SecD from Streptomyces coelicolor (strain ATCC BAA-471 / A3(2) / M145).